A 145-amino-acid chain; its full sequence is U1 small nuclear ribonucleoprotein C (145 aa).

The segment at Tyr4–Phe36 adopts a Matrin-type zinc-finger fold. Residues Phe67–Pro91 are disordered. Over residues Gly73–Pro91 the composition is skewed to pro residues.

It belongs to the U1 small nuclear ribonucleoprotein C family. U1 snRNP is composed of the 7 core Sm proteins B/B', D1, D2, D3, E, F and G that assemble in a heptameric protein ring on the Sm site of the small nuclear RNA to form the core snRNP, and at least 3 U1 snRNP-specific proteins U1-70K, U1-A and U1-C. U1-C interacts with U1 snRNA and the 5' splice-site region of the pre-mRNA.

The protein localises to the nucleus. Component of the spliceosomal U1 snRNP, which is essential for recognition of the pre-mRNA 5' splice-site and the subsequent assembly of the spliceosome. U1-C is directly involved in initial 5' splice-site recognition for both constitutive and regulated alternative splicing. The interaction with the 5' splice-site seems to precede base-pairing between the pre-mRNA and the U1 snRNA. Stimulates commitment or early (E) complex formation by stabilizing the base pairing of the 5' end of the U1 snRNA and the 5' splice-site region. Regulates alternative splicing of a distinct group of target genes. The protein is U1 small nuclear ribonucleoprotein C of Drosophila melanogaster (Fruit fly).